The primary structure comprises 155 residues: Small ribosomal subunit protein bS6 (155 aa).

A disordered region spans residues 94 to 155 (EEHETEPSAM…RDDNSDGGQE (62 aa)). The span at 107–149 (RGDRGDRGDRRGGDRFGDRDRGDRGDRGSSRFGDRERPRRDDN) shows a compositional bias: basic and acidic residues.

This sequence belongs to the bacterial ribosomal protein bS6 family.

Its function is as follows. Binds together with bS18 to 16S ribosomal RNA. This Parvibaculum lavamentivorans (strain DS-1 / DSM 13023 / NCIMB 13966) protein is Small ribosomal subunit protein bS6.